The chain runs to 342 residues: tRNA N6-adenosine threonylcarbamoyltransferase (342 aa).

Positions 111 and 115 each coordinate Fe cation. Substrate-binding positions include 134-138 (LVSGG), Asp167, Gly180, and Asn274. Asp302 lines the Fe cation pocket.

It belongs to the KAE1 / TsaD family. Fe(2+) is required as a cofactor.

The protein localises to the cytoplasm. It carries out the reaction L-threonylcarbamoyladenylate + adenosine(37) in tRNA = N(6)-L-threonylcarbamoyladenosine(37) in tRNA + AMP + H(+). Its function is as follows. Required for the formation of a threonylcarbamoyl group on adenosine at position 37 (t(6)A37) in tRNAs that read codons beginning with adenine. Is involved in the transfer of the threonylcarbamoyl moiety of threonylcarbamoyl-AMP (TC-AMP) to the N6 group of A37, together with TsaE and TsaB. TsaD likely plays a direct catalytic role in this reaction. This chain is tRNA N6-adenosine threonylcarbamoyltransferase, found in Herminiimonas arsenicoxydans.